We begin with the raw amino-acid sequence, 756 residues long: Xylosyl- and glucuronyltransferase LARGE1 (756 aa).

At 1-10 (MLGICRGRRK) the chain is on the cytoplasmic side. Residues 11–31 (FLAASLTVLFVPAVTWIYLFA) form a helical; Signal-anchor for type II membrane protein membrane-spanning segment. Topologically, residues 32–756 (GSFEDGKPVS…LKYLTAENNS (725 aa)) are lumenal. Disordered regions lie at residues 42 to 63 (LSPLESQPHSPRYTASSQRDRE) and 81 to 109 (KQLSLAQGRSPSHHRGNHSKTYSMEEGTG). Polar residues predominate over residues 44–58 (PLESQPHSPRYTASS). The stretch at 55-90 (TASSQRDRESLEVRMREVEEENRVLRKQLSLAQGRS) forms a coiled coil. Asn97, Asn122, and Asn148 each carry an N-linked (GlcNAc...) asparagine glycan. The interval 138-413 (IHVAIVCAGY…FLEYDGNLLR (276 aa)) is xylosyltransferase activity. 2 residues coordinate Mn(2+): Asp242 and Asp244. Residue Asn272 is glycosylated (N-linked (GlcNAc...) asparagine). The glucuronyltransferase activity stretch occupies residues 414–756 (RELFGCPSEA…LKYLTAENNS (343 aa)). Mn(2+)-binding residues include Asp563 and Asp565.

The protein in the C-terminal section; belongs to the glycosyltransferase 49 family. In the N-terminal section; belongs to the glycosyltransferase 8 family. It depends on Mn(2+) as a cofactor.

It localises to the golgi apparatus membrane. It catalyses the reaction 3-O-[beta-D-GlcA-(1-&gt;3)-beta-D-Xyl-(1-&gt;4)-Rib-ol-P-Rib-ol-P-3-beta-D-GalNAc-(1-&gt;3)-beta-D-GlcNAc-(1-&gt;4)-(O-6-P-alpha-D-Man)]-Thr-[protein] + UDP-alpha-D-xylose = 3-O-[alpha-D-Xyl-(1-&gt;3)-beta-D-GlcA-(1-&gt;4)-beta-D-Xyl-(1-&gt;4)-Rib-ol-P-Rib-ol-P-3-beta-D-GalNAc-(1-&gt;3)-beta-D-GlcNAc-(1-&gt;4)-(O-6-P-alpha-D-Man)]-Thr-[protein] + UDP + H(+). The catalysed reaction is 3-O-{(1-&gt;[3)-alpha-D-Xyl-(1-&gt;3)-beta-D-GlcA-(1-&gt;](n)-4)-beta-D-Xyl-(1-&gt;4)-Rib-ol-P-Rib-ol-P-3-beta-D-GalNAc-(1-&gt;3)-beta-D-GlcNAc-(1-&gt;4)-O-6-P-alpha-D-Man}-L-Thr-[protein] + UDP-alpha-D-glucuronate = 3-O-{beta-D-GlcA-(1-&gt;[3)-alpha-D-Xyl-(1-&gt;3)-beta-D-GlcA-(1-&gt;](n)-4)-beta-D-Xyl-(1-&gt;4)-Rib-ol-P-Rib-ol-P-3-beta-D-GalNAc-(1-&gt;3)-beta-D-GlcNAc-(1-&gt;4)-O-6-P-alpha-D-Man}-L-Thr-[protein] + UDP + H(+). The enzyme catalyses 3-O-{beta-D-GlcA-(1-&gt;[3)-alpha-D-Xyl-(1-&gt;3)-beta-D-GlcA-(1-&gt;](n)-4)-beta-D-Xyl-(1-&gt;4)-Rib-ol-P-Rib-ol-P-3-beta-D-GalNAc-(1-&gt;3)-beta-D-GlcNAc-(1-&gt;4)-O-6-P-alpha-D-Man}-L-Thr-[protein] + UDP-alpha-D-xylose = 3-O-{(1-&gt;[3)-alpha-D-Xyl-(1-&gt;3)-beta-D-GlcA-(1-&gt;](n+1)-4)-beta-D-Xyl-(1-&gt;4)-Rib-ol-P-Rib-ol-P-3-beta-D-GalNAc-(1-&gt;3)-beta-D-GlcNAc-(1-&gt;4)-O-6-P-alpha-D-Man}-L-Thr-[protein] + UDP + H(+). The protein operates within protein modification; protein glycosylation. Functionally, bifunctional glycosyltransferase with both alpha-1,3-xylosyltransferase and beta-1,3-glucuronyltransferase activities involved in the maturation of alpha-dystroglycan (DAG1) by glycosylation leading to DAG1 binding to laminin G-like domain-containing extracellular proteins with high affinity. Elongates the glucuronyl-beta-1,4-xylose-beta disaccharide primer structure initiated by B4GAT1 by adding repeating units [-3-Xylose-alpha-1,3-GlcA-beta-1-] to produce a heteropolysaccharide. Requires the phosphorylation of core M3 (O-mannosyl trisaccharide) by POMK to elongate the glucuronyl-beta-1,4-xylose-beta disaccharide primer. Plays a key role in skeletal muscle function and regeneration. This Gallus gallus (Chicken) protein is Xylosyl- and glucuronyltransferase LARGE1.